The primary structure comprises 311 residues: tRNA dimethylallyltransferase 2 (311 aa).

An ATP-binding site is contributed by 15–22 (GPTAVGKT). Residue 17–22 (TAVGKT) participates in substrate binding. Residues 40 to 43 (DSMQ) form an interaction with substrate tRNA region.

Belongs to the IPP transferase family. Monomer. Mg(2+) is required as a cofactor.

The enzyme catalyses adenosine(37) in tRNA + dimethylallyl diphosphate = N(6)-dimethylallyladenosine(37) in tRNA + diphosphate. Its function is as follows. Catalyzes the transfer of a dimethylallyl group onto the adenine at position 37 in tRNAs that read codons beginning with uridine, leading to the formation of N6-(dimethylallyl)adenosine (i(6)A). This is tRNA dimethylallyltransferase 2 from Syntrophus aciditrophicus (strain SB).